A 725-amino-acid chain; its full sequence is Probable dipeptidyl-peptidase 5 (725 aa).

The signal sequence occupies residues 1 to 18 (MGALRWLSIAATASTALA). 6 N-linked (GlcNAc...) asparagine glycosylation sites follow: N75, N96, N153, N258, N383, and N453. S563 acts as the Charge relay system in catalysis. N610 carries N-linked (GlcNAc...) asparagine glycosylation. Active-site charge relay system residues include D646 and H678.

This sequence belongs to the peptidase S9C family.

The protein localises to the secreted. Its function is as follows. Extracellular dipeptidyl-peptidase which removes N-terminal dipeptides sequentially from polypeptides having unsubstituted N-termini. The protein is Probable dipeptidyl-peptidase 5 (dpp5) of Aspergillus flavus (strain ATCC 200026 / FGSC A1120 / IAM 13836 / NRRL 3357 / JCM 12722 / SRRC 167).